The chain runs to 474 residues: Glutathione synthetase (474 aa).

Ala-2 bears the N-acetylalanine mark. Arg-125 lines the substrate pocket. Residue Glu-144 coordinates ATP. Glu-144 and Asn-146 together coordinate Mg(2+). Residues 148-151 (ISAS), 214-216 (ERN), Gln-220, and 267-270 (RDGY) each bind substrate. ATP is bound by residues Lys-305, 364-373 (KPQREGGGNN), Tyr-375, and 398-401 (MEKI). Glu-368 contacts Mg(2+). The residue at position 415 (Ser-415) is a Phosphoserine. ATP is bound at residue Glu-425. A substrate-binding site is contributed by Arg-450. Residues Lys-452 and Asp-458 each contribute to the ATP site. 461–462 (VA) serves as a coordination point for substrate.

Belongs to the eukaryotic GSH synthase family. Homodimer. Mg(2+) is required as a cofactor.

The catalysed reaction is gamma-L-glutamyl-L-cysteine + glycine + ATP = glutathione + ADP + phosphate + H(+). It carries out the reaction gamma-L-glutamyl-(2S)-2-aminobutanoate + glycine + ATP = ophthalmate + ADP + phosphate + H(+). It participates in sulfur metabolism; glutathione biosynthesis; glutathione from L-cysteine and L-glutamate: step 2/2. Its function is as follows. Catalyzes the production of glutathione from gamma-glutamylcysteine and glycine in an ATP-dependent manner. Glutathione (gamma-glutamylcysteinylglycine, GSH) is the most abundant intracellular thiol in living aerobic cells and is required for numerous processes including the protection of cells against oxidative damage, amino acid transport, the detoxification of foreign compounds, the maintenance of protein sulfhydryl groups in a reduced state and acts as a cofactor for a number of enzymes. Participates in ophthalmate biosynthesis in hepatocytes. This chain is Glutathione synthetase, found in Rattus norvegicus (Rat).